The following is a 657-amino-acid chain: Cyclic-di-AMP phosphodiesterase PdeA (657 aa).

2 helical membrane-spanning segments follow: residues 13 to 35 and 37 to 53; these read PLYG…SWWL and ALVV…MFYF. Residues 74–137 form a PAS-like region; sequence RSEEEALVEM…ITGNDEKGIM (64 aa). The 129-residue stretch at 175 to 303 folds into the GGDEF domain; that stretch reads NKSVFAVIFL…GGDQVVIKQP (129 aa). Residues 342 to 498 form a DHH region; sequence VFVMGHRYPD…IEATALLSGI (157 aa). Mn(2+) is bound by residues His347, Asp351, Asp353, Asp422, His446, and Asp501. The tract at residues 592–645 is DHHA1; sequence VITLRPDKLIGISARSLGQINVQVIMEKLGGGGHLSNAATQLKDVTIAEAEKQL.

This sequence belongs to the GdpP/PdeA phosphodiesterase family. Heme b is required as a cofactor. Mn(2+) serves as cofactor.

The protein resides in the cell membrane. It carries out the reaction 3',3'-c-di-AMP + H2O = 5'-O-phosphonoadenylyl-(3'-&gt;5')-adenosine + H(+). Has phosphodiesterase (PDE) activity against cyclic-di-AMP (c-di-AMP). Overexpression decreases export of c-di-AMP, leads to slightly increased susceptibility to the antibiotic cefuroxime and somewhat slower growth in macrophages. There are at least 2 PDEs for c-di-AMP in this bacteria (this one and pgpH); this may be the major PDE for intracellular growth in host macrophages. During host infection c-di-AMP is secreted into the host cytoplasm which leads to interferon-beta production and secretion by the host. c-di-AMP is a second messenger that mediates growth, cell wall stability and virulence. May monitor cellular heme or NO levels. This Listeria monocytogenes serotype 1/2a (strain 10403S) protein is Cyclic-di-AMP phosphodiesterase PdeA.